The chain runs to 218 residues: MLKGLTSKADARLKPALPGFTNVYRYWDARFAKVAVKLQPGECYVTKNDEMLVTVLGSCIAACIRDPVAGVGGMNHFMLPEQAAGHEITRNSLSNPELCYGNWAMEHLINSIIKCGGMRNRLEIKLFGGGRVLANMVRMDIGQRNIEFVESFLANDELPVIAKDLGGNYPRKILYFAATGQAKMKKMGIASDTNLVKQEKAYLDSLATKPSAGDVELF.

This sequence belongs to the CheD family.

It catalyses the reaction L-glutaminyl-[protein] + H2O = L-glutamyl-[protein] + NH4(+). In terms of biological role, probably deamidates glutamine residues to glutamate on methyl-accepting chemotaxis receptors (MCPs), playing an important role in chemotaxis. The sequence is that of Probable chemoreceptor glutamine deamidase CheD from Saccharophagus degradans (strain 2-40 / ATCC 43961 / DSM 17024).